Here is a 374-residue protein sequence, read N- to C-terminus: Nucleosome assembly protein 1;3 (374 aa).

Residues 26–80 (VNALKNKLQNLAGQHSDVLENLTPKIRRRVEVLREIQGKHDEIETKFREERAALE) are a coiled coil. Ser-41 is subject to Phosphoserine. The Nuclear export signal signature appears at 47-62 (LTPKIRRRVEVLREIQ). The Nuclear localization signal signature appears at 222–227 (KKKPKK). The span at 299–339 (IEGEEFEIDNDDEDDIDEDEDEDEEDEDEDEEEDDEDEEEE) shows a compositional bias: acidic residues. The tract at residues 299–374 (IEGEEFEIDN…GERPPECKQQ (76 aa)) is disordered. Residues 343–355 (TKKKPSVLHKKGG) are compositionally biased toward basic residues. Residues 364-374 (QGERPPECKQQ) are compositionally biased toward basic and acidic residues. Cys-371 carries the cysteine methyl ester modification. Cys-371 carries the S-farnesyl cysteine lipid modification. The propeptide at 372-374 (KQQ) is removed in mature form.

The protein belongs to the nucleosome assembly protein (NAP) family. As to quaternary structure, can form homomeric and heteromeric protein complexes with NAP1;1, NAP1;2 and NAP1;4. Binds histone H2A and associates with chromatin in vivo. Ubiquitous.

Its subcellular location is the nucleus. It localises to the cytoplasm. May modulate chromatin structure by regulation of nucleosome assembly/disassembly. May function in nucleotide excision repair (NER). Involved in somatic homologous recombination. Could be involved in response to abscisic acid (ABA) and to salt stress. The sequence is that of Nucleosome assembly protein 1;3 (NAP1;3) from Arabidopsis thaliana (Mouse-ear cress).